The chain runs to 103 residues: Small ribosomal subunit protein uS10 (103 aa).

The protein belongs to the universal ribosomal protein uS10 family. Part of the 30S ribosomal subunit.

Functionally, involved in the binding of tRNA to the ribosomes. This chain is Small ribosomal subunit protein uS10, found in Bordetella petrii (strain ATCC BAA-461 / DSM 12804 / CCUG 43448).